The following is a 459-amino-acid chain: MVSFTKFTLQLLSASAAFAYFEPLTIKGRKFFKNDTQFYIKGVAYQPAVDAEETSTIVDPLAEVNYKNCTEDAKIISNLGANVIRVYAVNASLNHDKCMEAFRNESIYVFLDLANPKTGIDRDTPTWNTDQFSSYQSVIDTFQKYNNTGAFFAGNEVVNNASNAPAVAYVRAAVRDSKNYIKSKKYRTIPVGYAGADIPVVRTELAAYLSCNATKLNNDTNSETDFLGYNMYEWCGHSDFYTSGYAARTQELENFTIPIFLSEFGCNKVTPRVFTEVQAIYSDNMTNVWSGGIVYEYSQEVNDYGLVNVSSTGERVLTTDYNNLKKQWASISPNITYKHSYNPNGTIPECPSRNKTSWAVSANAFPVTPNTTICSNAVKNLKCSANGTPSGSKISQVLSELCYYDNKACSSISSDPYEGTYGNYTGCTGVQQLSIALNAYTQDHGADSCSWGGVGELKA.

An N-terminal signal peptide occupies residues methionine 1 to alanine 19. Residues asparagine 34 and asparagine 68 are each glycosylated (N-linked (GlcNAc...) asparagine). Cysteines 69 and 98 form a disulfide. Tyrosine 87 lines the (1,3-beta-D-glucosyl)n pocket. Asparagine 90, asparagine 104, and asparagine 146 each carry an N-linked (GlcNAc...) asparagine glycan. (1,3-beta-D-glucosyl)n is bound by residues asparagine 155 and glutamate 156. Catalysis depends on glutamate 156, which acts as the Proton donor. Residue asparagine 160 is glycosylated (N-linked (GlcNAc...) asparagine). (1,3-beta-D-glucosyl)n contacts are provided by aspartate 197 and arginine 202. Disulfide bonds link cysteine 211/cysteine 350 and cysteine 235/cysteine 266. Residues asparagine 212, asparagine 218, and asparagine 254 are each glycosylated (N-linked (GlcNAc...) asparagine). Glutamate 263 acts as the Nucleophile in catalysis. Asparagine 284 carries N-linked (GlcNAc...) asparagine glycosylation. Tyrosine 295 serves as a coordination point for (1,3-beta-D-glucosyl)n. Asparagine 308, asparagine 334, asparagine 344, asparagine 354, and asparagine 370 each carry an N-linked (GlcNAc...) asparagine glycan. Intrachain disulfides connect cysteine 374-cysteine 427, cysteine 383-cysteine 449, and cysteine 402-cysteine 409. The N-linked (GlcNAc...) asparagine glycan is linked to asparagine 423.

The protein belongs to the glycosyl hydrolase 72 family.

It is found in the endoplasmic reticulum lumen. It localises to the secreted. In terms of biological role, splits internally a 1,3-beta-glucan molecule and transfers the newly generated reducing end (the donor) to the non-reducing end of another 1,3-beta-glucan molecule (the acceptor) forming a 1,3-beta linkage, resulting in the elongation of 1,3-beta-glucan chains in the cell wall. The sequence is that of 1,3-beta-glucanosyltransferase gas2 (gas2) from Schizosaccharomyces pombe (strain 972 / ATCC 24843) (Fission yeast).